We begin with the raw amino-acid sequence, 408 residues long: RNA-splicing ligase RtcB (408 aa).

Mn(2+) contacts are provided by D75, C78, H168, H185, and H281. GMP is bound at residue 167-171 (NHFIE). GMP is bound by residues 281-282 (HN), 313-316 (PGSM), S320, 337-340 (HGAG), and K407. H337 serves as the catalytic GMP-histidine intermediate.

It belongs to the RtcB family. Monomer. Mn(2+) is required as a cofactor.

It carries out the reaction a 3'-end 3'-phospho-ribonucleotide-RNA + a 5'-end dephospho-ribonucleoside-RNA + GTP = a ribonucleotidyl-ribonucleotide-RNA + GMP + diphosphate. The catalysed reaction is a 3'-end 2',3'-cyclophospho-ribonucleotide-RNA + a 5'-end dephospho-ribonucleoside-RNA + GTP + H2O = a ribonucleotidyl-ribonucleotide-RNA + GMP + diphosphate + H(+). Functionally, GTP-dependent RNA ligase that is involved in RNA repair. Joins RNA with 2',3'-cyclic-phosphate or 3'-phosphate ends to RNA with 5'-hydroxy ends. Also acts as a DNA ligase in case of DNA damage by splicing 'dirty' DNA breaks, characterized by 3'-phosphate (or cyclic-phosphate) and 5'-hydroxy ends that cannot be sealed by classical DNA ligases. Repairs tRNA cleaved by colicins D or E5, does not repair damaged 16S rRNA. Able to catalyze tRNA splicing in vivo in yeast, but bacteria are not known to splice tRNA. This chain is RNA-splicing ligase RtcB, found in Escherichia coli (strain K12).